The sequence spans 327 residues: GMP reductase (327 aa).

Cys176 acts as the Thioimidate intermediate in catalysis. Position 205 to 228 (205 to 228 (IIADGGIRTHGDIAKSIRFGATMV)) interacts with NADP(+).

The protein belongs to the IMPDH/GMPR family. GuaC type 2 subfamily.

It carries out the reaction IMP + NH4(+) + NADP(+) = GMP + NADPH + 2 H(+). Its function is as follows. Catalyzes the irreversible NADPH-dependent deamination of GMP to IMP. It functions in the conversion of nucleobase, nucleoside and nucleotide derivatives of G to A nucleotides, and in maintaining the intracellular balance of A and G nucleotides. The sequence is that of GMP reductase from Streptococcus equi subsp. zooepidemicus (strain H70).